We begin with the raw amino-acid sequence, 224 residues long: uncharacterized protein (224 aa).

Residues 1–17 form the signal peptide; sequence MFTILLYFLVLFWVTNA.

This is an uncharacterized protein from Caenorhabditis elegans.